A 683-amino-acid polypeptide reads, in one-letter code: MLFIFNFLFSPLPTPALICLLTFGTAIFLWLINRPQPVLPLIDLDNQSVGIEGGARRGAFQKNNDLILYYFSDAKTLYEVFQRGLAVSDNGPCLGYRKPNQPYKWISYKQVSDRAEYLGSCLLHKGYKPSQDQFIGIFAQNRPEWVISELACYTYSMVAVPLYDTLGAEAIIYVINRADISVVICDTPQKATMLIENVEKDLTPGLKTVILMDPFDDDLMKRGEKCGIEMLSLHDAENLGKENFKKPMPPNPEDLSVICFTSGTTGDPKGAMLTHQNIVSNMAAFLKFLEPIFQPTPEDVTISYLPLAHMFERLVQGVIFSCGGKIGFFQGDIRLLPDDMKALKPTVFPTVPRLLNRVYDKVQNEAKTPLKKFLLNLAIISKFNEVRNGIIRRNSLWDKLVFSKIQSSLGGKVRLMITGAAPISTPVLTFFRAAMGCWVFEAYGQTECTAGCSITSPGDWTAGHVGTPVSCNFVKLEDVADMNYFSVNNEGEICIKGNNVFKGYLKDPEKTQEVLDKDGWLHTGDIGRWLPNGTLKIIDRKKNIFKLAQGEYIAPEKIENVYSRSRPILQVFVHGESLRSFLIGVVVPDPESLPSFAAKIGVKGSFEELCQNQCVKKAILEDLQKVGKEGGLKSFEQVKSIFVHPEPFSIENGLLTPTLKAKRVELAKFFQTQIKSLYESIEE.

The chain crosses the membrane as a helical; Signal-anchor for type III membrane protein span at residues 12–32 (LPTPALICLLTFGTAIFLWLI). Over 33-683 (NRPQPVLPLI…IKSLYESIEE (651 aa)) the chain is Cytoplasmic. K361 carries the post-translational modification N6-acetyllysine.

Belongs to the ATP-dependent AMP-binding enzyme family. As to expression, expressed most abundantly in the small intestine, and to a much lesser extent in the lung, liver, adrenal gland, adipose tissue and kidney.

The protein localises to the mitochondrion. The protein resides in the endoplasmic reticulum. Its subcellular location is the mitochondrion outer membrane. It localises to the endoplasmic reticulum membrane. It is found in the cell membrane. The catalysed reaction is a long-chain fatty acid + ATP + CoA = a long-chain fatty acyl-CoA + AMP + diphosphate. It carries out the reaction (5Z,8Z,11Z,14Z)-eicosatetraenoate + ATP + CoA = (5Z,8Z,11Z,14Z)-eicosatetraenoyl-CoA + AMP + diphosphate. It catalyses the reaction 15-hydroxy-(5Z,8Z,11Z,13E)-eicosatetraenoate + ATP + CoA = 15-hydroxy-(5Z,8Z,11Z,13E)-eicosatetraenoyl-CoA + AMP + diphosphate. The enzyme catalyses 12-hydroxy-(5Z,8Z,10E,14Z)-eicosatetraenoate + ATP + CoA = 12-hydroxy-(5Z,8Z,10E,14Z)-eicosatetraenoyl-CoA + AMP + diphosphate. The catalysed reaction is 5-hydroxy-(6E,8Z,11Z,14Z)-eicosatetraenoate + ATP + CoA = 5-hydroxy-(6E,8Z,11Z,14Z)-eicosatetraenoyl-CoA + AMP + diphosphate. It carries out the reaction 14,15-epoxy-(5Z,8Z,11Z)-eicosatrienoate + ATP + CoA = 14,15-epoxy-(5Z,8Z,11Z)-eicosatrienoyl-CoA + AMP + diphosphate. It catalyses the reaction 11,12-epoxy-(5Z,8Z,14Z)-eicosatrienoate + ATP + CoA = 11,12-epoxy-(5Z,8Z,14Z)-eicosatrienoyl-CoA + AMP + diphosphate. The enzyme catalyses hexadecanoate + ATP + CoA = hexadecanoyl-CoA + AMP + diphosphate. The catalysed reaction is (E)-hexadec-2-enoate + ATP + CoA = (2E)-hexadecenoyl-CoA + AMP + diphosphate. It carries out the reaction (9Z)-octadecenoate + ATP + CoA = (9Z)-octadecenoyl-CoA + AMP + diphosphate. In terms of biological role, catalyzes the conversion of long-chain fatty acids to their active form acyl-CoAs for both synthesis of cellular lipids, and degradation via beta-oxidation. ACSL5 may sensitize epithelial cells to apoptosis specifically triggered by the death ligand TRAIL at the villus tip of the crypt-villus axis of the small intestine. May have a role in the survival of glioma cells. May activate fatty acids from exogenous sources for the synthesis of triacylglycerol destined for intracellular storage. It was suggested that it may also stimulate fatty acid oxidation. Utilizes a wide range of saturated fatty acids with a preference for C16-C18 unsaturated fatty acids. This chain is Long-chain-fatty-acid--CoA ligase 5, found in Rattus norvegicus (Rat).